A 243-amino-acid chain; its full sequence is R-spondin-2 (243 aa).

Residues 1-23 (MRFCLFSFALIILNCMDYSQCQG) form the signal peptide. 11 disulfide bridges follow: Cys-40-Cys-46, Cys-43-Cys-52, Cys-55-Cys-74, Cys-78-Cys-93, Cys-96-Cys-104, Cys-101-Cys-110, Cys-113-Cys-124, Cys-128-Cys-141, Cys-145-Cys-187, Cys-156-Cys-163, and Cys-196-Cys-203. An FU repeat occupies 90–134 (MNRCARCRIENCDSCFSKDFCTKCKVGFYLHRGRCFDECPDGFAP). The TSP type-1 domain occupies 144-204 (GCEVGHWSEW…RCKMAMRHCP (61 aa)). Asn-160 carries an N-linked (GlcNAc...) asparagine glycan. Residues 204-224 (PGGKRTPKAKEKRNKKKRRKL) show a composition bias toward basic residues. The segment at 204–243 (PGGKRTPKAKEKRNKKKRRKLIERAQEQHSVFLATDRVNQ) is disordered.

Belongs to the R-spondin family. In terms of assembly, interacts with WNT1. Binds heparin. Interacts with LGR4, LGR5 and LGR6.

Its subcellular location is the secreted. Functionally, activator of the canonical Wnt signaling pathway by acting as a ligand for LGR4-6 receptors. Upon binding to LGR4-6 (LGR4, LGR5 or LGR6), LGR4-6 associate with phosphorylated LRP6 and frizzled receptors that are activated by extracellular Wnt receptors, triggering the canonical Wnt signaling pathway to increase expression of target genes. Also regulates the canonical Wnt/beta-catenin-dependent pathway and non-canonical Wnt signaling by acting as an inhibitor of ZNRF3, an important regulator of the Wnt signaling pathway. Probably also acts as a ligand for frizzled and LRP receptors. During embryonic development, plays a crucial role in limb specification, amplifying the Wnt signaling pathway independently of LGR4-6 receptors, possibly by acting as a direct antagonistic ligand to RNF43 and ZNRF3, hence governing the number of limbs an embryo should form. This Mus musculus (Mouse) protein is R-spondin-2 (Rspo2).